The following is a 1842-amino-acid chain: Plexin-B2 (1842 aa).

The first 19 residues, 1 to 19 (MALPLWALTFLGLTGLGLS), serve as a signal peptide directing secretion. Positions 20–468 (LRSRKPESFR…TQDKVFRLPV (449 aa)) constitute a Sema domain. Topologically, residues 20 to 1201 (LRSRKPESFR…EYDTRASDVP (1182 aa)) are extracellular. Disulfide bonds link Cys78–Cys87 and Cys112–Cys120. 2 N-linked (GlcNAc...) asparagine glycosylation sites follow: Asn127 and Asn242. 3 cysteine pairs are disulfide-bonded: Cys250-Cys366, Cys266-Cys313, and Cys331-Cys353. N-linked (GlcNAc...) asparagine glycans are attached at residues Asn393 and Asn451. Disulfide bonds link Cys471-Cys488, Cys477-Cys520, Cys480-Cys497, Cys491-Cys503, and Cys557-Cys576. N-linked (GlcNAc...) asparagine glycosylation occurs at Asn798. 3 IPT/TIG domains span residues 806 to 895 (PVIT…QFTY), 898 to 982 (PQPL…SFTY), and 986 to 1095 (PMIR…VFEY). N-linked (GlcNAc...) asparagine glycans are attached at residues Asn919, Asn1053, and Asn1072. The chain crosses the membrane as a helical span at residues 1202-1222 (LSLILPLVMVPMVFIIVVSIY). Residues 1223-1842 (CYWRKSQQAE…AALENKVTDL (620 aa)) lie on the Cytoplasmic side of the membrane. Phosphoserine is present on residues Ser1240, Ser1248, and Ser1574.

This sequence belongs to the plexin family. As to quaternary structure, monomer, and heterodimer with PLXNB1. Interacts with MET, ARHGEF11 and ARHGEF12. May also interact with MST1R. Detected in macrophages from spleen and bone marrow (at protein level). Detected in granule cells in the developing cerebellum, dentate gyrus and olfactory bulb. Expressed in neurons and glia in the developing hippocampus.

It is found in the cell membrane. Its function is as follows. Cell surface receptor for SEMA4C, SEMA4D and SEMA4G that plays an important role in cell-cell signaling. Plays a role in glutamatergic synapse development and is required for SEMA4A-mediated excitatory synapse development. Binding to class 4 semaphorins promotes downstream activation of RHOA and phosphorylation of ERBB2 at 'Tyr-1248'. Also acts as a cell surface receptor for angiogenin (ANG); promoting ANG endocytosis and translocation to the cytoplasm or nucleus. Required for normal differentiation and migration of neuronal cells during brain corticogenesis and for normal embryonic brain development. Regulates the migration of cerebellar granule cells in the developing brain. Plays a role in RHOA activation and subsequent changes of the actin cytoskeleton. Plays a role in axon guidance, invasive growth and cell migration. May modulate the activity of RAC1 and CDC42. Down-regulates macrophage migration in wound-healing assays (in vitro). The sequence is that of Plexin-B2 from Mus musculus (Mouse).